We begin with the raw amino-acid sequence, 430 residues long: Formate-dependent phosphoribosylglycinamide formyltransferase (430 aa).

N(1)-(5-phospho-beta-D-ribosyl)glycinamide is bound by residues 26–27 (EL) and Glu86. Residues Arg118, Lys159, 199-202 (EEHI), and Glu207 each bind ATP. The region spanning 123 to 319 (ETLVKEAKVP…EFALHLRAVL (197 aa)) is the ATP-grasp domain. 2 residues coordinate Mg(2+): Glu276 and Glu288. N(1)-(5-phospho-beta-D-ribosyl)glycinamide contacts are provided by residues Asp295, Lys375, and 382-383 (RR).

The protein belongs to the PurK/PurT family. Homodimer.

The catalysed reaction is N(1)-(5-phospho-beta-D-ribosyl)glycinamide + formate + ATP = N(2)-formyl-N(1)-(5-phospho-beta-D-ribosyl)glycinamide + ADP + phosphate + H(+). It functions in the pathway purine metabolism; IMP biosynthesis via de novo pathway; N(2)-formyl-N(1)-(5-phospho-D-ribosyl)glycinamide from N(1)-(5-phospho-D-ribosyl)glycinamide (formate route): step 1/1. Its function is as follows. Involved in the de novo purine biosynthesis. Catalyzes the transfer of formate to 5-phospho-ribosyl-glycinamide (GAR), producing 5-phospho-ribosyl-N-formylglycinamide (FGAR). Formate is provided by PurU via hydrolysis of 10-formyl-tetrahydrofolate. The sequence is that of Formate-dependent phosphoribosylglycinamide formyltransferase from Pyrococcus horikoshii (strain ATCC 700860 / DSM 12428 / JCM 9974 / NBRC 100139 / OT-3).